We begin with the raw amino-acid sequence, 187 residues long: uncharacterized protein (187 aa).

The helical transmembrane segment at 3 to 23 threads the bilayer; the sequence is AIIIFLILFIVGVLIGVGVYY.

The protein localises to the membrane. This is an uncharacterized protein from Methanocaldococcus jannaschii (strain ATCC 43067 / DSM 2661 / JAL-1 / JCM 10045 / NBRC 100440) (Methanococcus jannaschii).